A 333-amino-acid chain; its full sequence is Dioxygenase cnsJ (333 aa).

Residues His153, Asp155, and His235 each coordinate Fe cation. A disordered region spans residues 309–333; sequence NAQPEGEDDGGMKPNEGEHVVEAQI. The segment covering 323–333 has biased composition (basic and acidic residues); sequence NEGEHVVEAQI.

It belongs to the PhyH family. Homodimer. The cofactor is Fe cation.

It participates in alkaloid biosynthesis. In terms of biological role, dioxygenase; part of the gene cluster that mediates the biosynthesis of communesins, a prominent class of indole alkaloids with great potential as pharmaceuticals. Communesins are biosynthesized by the coupling of tryptamine and aurantioclavine, two building blocks derived from L-tryptophan. The L-tryptophan decarboxylase cnsB converts L-tryptophan to tryptamine, whereas the tryptophan dimethylallyltransferase cnsF converts L-tryptophan to 4-dimethylallyl tryptophan which is further transformed to aurantioclavine by the aurantioclavine synthase cnsA, probably aided by the catalase cnsD. The cytochrome P450 monooxygenase cnsC catalyzes the heterodimeric coupling between the two different indole moieties, tryptamine and aurantioclavine, to construct vicinal quaternary stereocenters and yield the heptacyclic communesin scaffold. The O-methyltransferase cnsE then methylates the communesin scaffold to produce communesin K, the simplest characterized communesin that contains the heptacyclic core. The dioxygenase cnsJ converts communesin K into communesin I. Acylation to introduce the hexadienyl group at position N16 of communesin I by the acyltransferase cnsK leads to the production of communesin B. The hexadienyl group is produced by the highly reducing polyketide synthase cnsI, before being hydrolytically removed from cnsI by the serine hydrolase cnsH, converted into hexadienyl-CoA by the CoA ligase cnsG, and then transferred to communesin I by cnsK. Surprisingly, cnsK may also be a promiscuous acyltransferase that can tolerate a range of acyl groups, including acetyl-, propionyl-, and butyryl-CoA, which lead to communesins A, G and H respectively. The roles of the alpha-ketoglutarate-dependent dioxygenases cnsM and cnsP have still to be determined. This Penicillium expansum (Blue mold rot fungus) protein is Dioxygenase cnsJ.